Here is a 118-residue protein sequence, read N- to C-terminus: MAEQVTSAQATAKTVRIAARKIRLVVDLIRGKSVAEAFAILKFTPRSASPVVEKVLKSAVANAENNFDLDREDLVISKVFVNEGPTLKRFRPRAKGSASPINKRTSHITVVVSEKQEG.

This sequence belongs to the universal ribosomal protein uL22 family. Part of the 50S ribosomal subunit.

Its function is as follows. This protein binds specifically to 23S rRNA; its binding is stimulated by other ribosomal proteins, e.g. L4, L17, and L20. It is important during the early stages of 50S assembly. It makes multiple contacts with different domains of the 23S rRNA in the assembled 50S subunit and ribosome. Functionally, the globular domain of the protein is located near the polypeptide exit tunnel on the outside of the subunit, while an extended beta-hairpin is found that lines the wall of the exit tunnel in the center of the 70S ribosome. This Pediococcus pentosaceus (strain ATCC 25745 / CCUG 21536 / LMG 10740 / 183-1w) protein is Large ribosomal subunit protein uL22.